The primary structure comprises 387 residues: GTPase Obg (387 aa).

Residues 1–159 (MKFVDEAIIR…RSLKLELLLL (159 aa)) form the Obg domain. In terms of domain architecture, OBG-type G spans 160–333 (ADVGLLGMPN…LAVKLLDFIA (174 aa)). GTP-binding positions include 166 to 173 (GMPNAGKS), 191 to 195 (FTTLV), 213 to 216 (DIPG), 283 to 286 (NKAD), and 314 to 316 (SAY). Mg(2+)-binding residues include Ser-173 and Thr-193.

It belongs to the TRAFAC class OBG-HflX-like GTPase superfamily. OBG GTPase family. Monomer. Requires Mg(2+) as cofactor.

Its subcellular location is the cytoplasm. In terms of biological role, an essential GTPase which binds GTP, GDP and possibly (p)ppGpp with moderate affinity, with high nucleotide exchange rates and a fairly low GTP hydrolysis rate. Plays a role in control of the cell cycle, stress response, ribosome biogenesis and in those bacteria that undergo differentiation, in morphogenesis control. The polypeptide is GTPase Obg (Shewanella halifaxensis (strain HAW-EB4)).